The chain runs to 445 residues: Trigger factor (445 aa).

One can recognise a PPIase FKBP-type domain in the interval 162 to 247 (GDQVTIDAIG…IKAVHTAEPT (86 aa)).

This sequence belongs to the FKBP-type PPIase family. Tig subfamily.

It is found in the cytoplasm. It carries out the reaction [protein]-peptidylproline (omega=180) = [protein]-peptidylproline (omega=0). In terms of biological role, involved in protein export. Acts as a chaperone by maintaining the newly synthesized protein in an open conformation. Functions as a peptidyl-prolyl cis-trans isomerase. The protein is Trigger factor of Rickettsia conorii (strain ATCC VR-613 / Malish 7).